Here is a 236-residue protein sequence, read N- to C-terminus: Glycoprotein U23 (236 aa).

The N-terminal stretch at 1–17 (MLFLSFLLVCLCEEVRM) is a signal peptide. N-linked (GlcNAc...) asparagine; by host glycans are attached at residues N67, N80, and N103. The helical transmembrane segment at 184 to 204 (LVIWIGGISFIGAFVILIVIL) threads the bilayer.

The protein resides in the membrane. The chain is Glycoprotein U23 (U23) from Human herpesvirus 6A (strain Uganda-1102) (HHV-6 variant A).